Here is a 350-residue protein sequence, read N- to C-terminus: Farnesyl pyrophosphate synthase (350 aa).

Isopentenyl diphosphate is bound by residues Lys-55, Arg-58, and Gln-94. The Mg(2+) site is built by Asp-101 and Asp-105. Arg-110 lines the dimethylallyl diphosphate pocket. Residue Arg-111 coordinates isopentenyl diphosphate. Dimethylallyl diphosphate contacts are provided by Lys-198, Thr-199, Gln-237, Lys-254, and Lys-263.

This sequence belongs to the FPP/GGPP synthase family. Mg(2+) is required as a cofactor.

It is found in the cytoplasm. It carries out the reaction isopentenyl diphosphate + dimethylallyl diphosphate = (2E)-geranyl diphosphate + diphosphate. It catalyses the reaction isopentenyl diphosphate + (2E)-geranyl diphosphate = (2E,6E)-farnesyl diphosphate + diphosphate. It participates in isoprenoid biosynthesis; farnesyl diphosphate biosynthesis; farnesyl diphosphate from geranyl diphosphate and isopentenyl diphosphate: step 1/1. The protein operates within isoprenoid biosynthesis; geranyl diphosphate biosynthesis; geranyl diphosphate from dimethylallyl diphosphate and isopentenyl diphosphate: step 1/1. Its function is as follows. Catalyzes the sequential condensation of isopentenyl pyrophosphate with the allylic pyrophosphates, dimethylallyl pyrophosphate, and then with the resultant geranylpyrophosphate to the ultimate product farnesyl pyrophosphate. The sequence is that of Farnesyl pyrophosphate synthase (FPS) from Zea mays (Maize).